A 146-amino-acid polypeptide reads, in one-letter code: Hemoglobin subunit beta (146 aa).

An N-acetylvaline modification is found at Val1. The Globin domain occupies 2–146 (HLSAEEKAAV…VANALAHKYH (145 aa)). Thr12 carries the post-translational modification Phosphothreonine. Ser44 bears the Phosphoserine mark. Lys59 bears the N6-acetyllysine mark. His63 serves as a coordination point for heme b. N6-acetyllysine is present on Lys82. His92 serves as a coordination point for heme b. Cys93 carries the post-translational modification S-nitrosocysteine. Lys144 bears the N6-acetyllysine mark.

It belongs to the globin family. Heterotetramer of two alpha chains and two beta chains. As to expression, red blood cells.

In terms of biological role, involved in oxygen transport from the lung to the various peripheral tissues. This chain is Hemoglobin subunit beta (HBB), found in Ctenodactylus gundi (Northern gundi).